A 163-amino-acid chain; its full sequence is Shikimate kinase (163 aa).

10 to 15 (GVGKTT) serves as a coordination point for ATP. Threonine 14 provides a ligand contact to Mg(2+). Residues aspartate 28, arginine 52, and glycine 75 each contribute to the substrate site. Arginine 116 lines the ATP pocket. Arginine 134 serves as a coordination point for substrate. Arginine 151 is an ATP binding site.

Belongs to the shikimate kinase family. As to quaternary structure, monomer. The cofactor is Mg(2+).

Its subcellular location is the cytoplasm. It carries out the reaction shikimate + ATP = 3-phosphoshikimate + ADP + H(+). The protein operates within metabolic intermediate biosynthesis; chorismate biosynthesis; chorismate from D-erythrose 4-phosphate and phosphoenolpyruvate: step 5/7. Catalyzes the specific phosphorylation of the 3-hydroxyl group of shikimic acid using ATP as a cosubstrate. The polypeptide is Shikimate kinase (Streptococcus pyogenes serotype M49 (strain NZ131)).